Consider the following 584-residue polypeptide: 2-succinyl-5-enolpyruvyl-6-hydroxy-3-cyclohexene-1-carboxylate synthase (584 aa).

The tract at residues 563–584 (TDAEASHRERERLADRVTGLSV) is disordered. Basic and acidic residues predominate over residues 566 to 577 (EASHRERERLAD).

This sequence belongs to the TPP enzyme family. MenD subfamily. In terms of assembly, homodimer. Requires Mg(2+) as cofactor. Mn(2+) serves as cofactor. The cofactor is thiamine diphosphate.

It catalyses the reaction isochorismate + 2-oxoglutarate + H(+) = 5-enolpyruvoyl-6-hydroxy-2-succinyl-cyclohex-3-ene-1-carboxylate + CO2. It functions in the pathway quinol/quinone metabolism; 1,4-dihydroxy-2-naphthoate biosynthesis; 1,4-dihydroxy-2-naphthoate from chorismate: step 2/7. The protein operates within quinol/quinone metabolism; menaquinone biosynthesis. Catalyzes the thiamine diphosphate-dependent decarboxylation of 2-oxoglutarate and the subsequent addition of the resulting succinic semialdehyde-thiamine pyrophosphate anion to isochorismate to yield 2-succinyl-5-enolpyruvyl-6-hydroxy-3-cyclohexene-1-carboxylate (SEPHCHC). This Halobacterium salinarum (strain ATCC 29341 / DSM 671 / R1) protein is 2-succinyl-5-enolpyruvyl-6-hydroxy-3-cyclohexene-1-carboxylate synthase.